The sequence spans 317 residues: D-alanine--D-alanine ligase (317 aa).

The ATP-grasp domain maps to 103–299 (KHIFHSLNID…FNELVKIIVE (197 aa)). Position 130–183 (130–183 (KVDYPYVLKPINEGSSIGVHMIFSHEDYLELKNNSSTIMEKMIIEEYIPGIELH)) interacts with ATP. Residues D251, E265, and N267 each coordinate Mg(2+).

Belongs to the D-alanine--D-alanine ligase family. The cofactor is Mg(2+). It depends on Mn(2+) as a cofactor.

It is found in the cytoplasm. It carries out the reaction 2 D-alanine + ATP = D-alanyl-D-alanine + ADP + phosphate + H(+). The protein operates within cell wall biogenesis; peptidoglycan biosynthesis. Cell wall formation. In Wolbachia pipientis subsp. Culex pipiens (strain wPip), this protein is D-alanine--D-alanine ligase.